Here is a 231-residue protein sequence, read N- to C-terminus: 7-cyano-7-deazaguanine synthase (231 aa).

8 to 18 (FSGGQDSTTCL) contributes to the ATP binding site. Positions 188, 197, 200, and 203 each coordinate Zn(2+).

Belongs to the QueC family. The cofactor is Zn(2+).

It catalyses the reaction 7-carboxy-7-deazaguanine + NH4(+) + ATP = 7-cyano-7-deazaguanine + ADP + phosphate + H2O + H(+). It functions in the pathway purine metabolism; 7-cyano-7-deazaguanine biosynthesis. In terms of biological role, catalyzes the ATP-dependent conversion of 7-carboxy-7-deazaguanine (CDG) to 7-cyano-7-deazaguanine (preQ(0)). The sequence is that of 7-cyano-7-deazaguanine synthase from Enterobacter sp. (strain 638).